The chain runs to 2527 residues: Leucine-rich repeat serine/threonine-protein kinase 2 (2527 aa).

A required for RAB29-mediated activation region spans residues 1-969; that stretch reads MASGACQGCE…RSSRLPSHMR (969 aa). Residues 9–33 adopt a coiled-coil conformation; the sequence is CEEEEEEEALKKLIVRLNNVQEGKQ. Phosphoserine is present on residues Ser910, Ser935, Ser955, and Ser973. The disordered stretch occupies residues 957–979; it reads ESLRSSRLPSHMRQSDSSSSLAS. Residues 961 to 978 show a composition bias toward low complexity; sequence SSRLPSHMRQSDSSSSLA. 13 LRR repeats span residues 983-1004, 1012-1033, 1036-1057, 1059-1080, 1084-1105, 1108-1129, 1130-1150, 1156-1171, 1174-1196, 1197-1218, 1221-1245, 1246-1267, and 1269-1291; these read HITSLDLSANELKDIDALSQKC, HLTKLELHQNSLTSFPQQLCET, CLIHLDLHSNKFTSFPSFVLKM, RITNLDASRNDIGPTVVLDPAM, SLKQLNLSYNQLSSIPENLAQV, KLEQLLLEGNKISGICSPLSLK, ELKILNLSKNHIPSLPGDFLE, ESFSARMNFLAAMPAL, SITSLKLSQNSFTCIPEAIFSLP, HLRSLDMSHNNIECLPGPAHWK, NLRELIFSKNQISTLDFSENPHVWS, RVEKLHLSHNKLKEIPPEIGCL, and NLTSLDVSYNLELRSFPNEMGKL. Ser1292 bears the Phosphoserine; by autocatalysis mark. The region spanning 1328 to 1511 is the Roc domain; sequence KAVPYNRMKL…KTIINESLNF (184 aa). 1341–1348 contributes to the GTP binding site; the sequence is GNTGSGKT. Ser1444 bears the Phosphoserine mark. One can recognise a COR domain in the interval 1543–1740; sequence TEFPVINRKH…RMYWRQGIYL (198 aa). Residues 1879–2146 form the Protein kinase domain; that stretch reads EAPEFLLGDG…LICLMRHILI (268 aa). ATP is bound by residues Leu1885, Asp1887, Gly1888, Gly1891, Val1893, Ala1904, Lys1906, Met1947, Glu1948, Ala1950, Ser1954, and Arg1957. Asp1994 serves as the catalytic Proton acceptor. ATP-binding residues include His1998, Leu2001, Ala2016, and Asp2017. 2098–2121 is a binding site for GTP; it reads EYGCAPWPMVEKLITKCLKENPQE. 7 WD repeats span residues 2139-2183, 2188-2228, 2233-2276, 2281-2327, 2333-2377, 2402-2438, and 2443-2497; these read CLMR…SLFD, RYSY…LVIN, TKRH…MIFE, KCKG…FSFS, QKLI…EVWD, KESKHQLSYSGRVKALCLQKNTALWIGTGGGHILLLD, and RVIR…SIWD. 2295-2298 contributes to the GTP binding site; that stretch reads DVST.

The protein belongs to the protein kinase superfamily. TKL Ser/Thr protein kinase family. As to quaternary structure, homodimer. Homotetramer; when activated by GTP-bound RAB29. Interacts with PRKN, PRDX3 and TPCN2. Interacts with VPS35. Interacts (via N-terminus) with RAB29; this interaction is direct and stimulates kinase activity. Interacts (via ROC domain) with SEC16A. Interacts with APP; interaction promotes phosphorylation of 'Thr-743' of APP. Interacts with MAPT. Interacts with RAB8A, RAB10, and RAB12. Interacts (via N-terminus) with RAB32. Interacts with YWHAG; this interaction is dependent on phosphorylation of Ser-910 and either Ser-935 or Ser-1444. Interacts with SFN; this interaction is dependent on phosphorylation of Ser-910 and/or Ser-935. It depends on Mg(2+) as a cofactor. Post-translationally, autophosphorylated at Ser-1292. Autophosphorylation is stimulated by RAB29. Phosphorylation of Ser-910 and Ser-935 or Ser-1444 facilitates interaction with YWHAG. Phosphorylation of Ser-910 and/or Ser-935 facilitates interaction with SFN. Ubiquitinated by TRIM1; undergoes 'Lys-48'-linked polyubiquitination leading to proteasomal degradation. Expressed in the brain (at protein level). Detected throughout the adult brain. Expressed in deep cerebral cortex layers, superficial cingulate cortex layers, the piriform cortex, hippocampal formation, caudate putamen, substantia nigra, the basolateral and basomedial anterior amygdala nuclei, reticular thalamic nucleus and also in the cerebellar granular cell layer. Highly expressed in the striatum, cortex and olfactory tubercle. Little or no expression in the substantia nigra, where dopaminergic neurons preferentially degenerate in Parkinson disease. Expression is particularly high in brain dopaminoceptive areas. High and strikingly specific expression in striatum and parts of cortex and no signals in dopamine neurons.

Its subcellular location is the cytoplasmic vesicle. It localises to the perikaryon. The protein localises to the cell projection. The protein resides in the axon. It is found in the dendrite. Its subcellular location is the golgi apparatus membrane. It localises to the endoplasmic reticulum membrane. The protein localises to the secretory vesicle. The protein resides in the synaptic vesicle membrane. It is found in the endosome. Its subcellular location is the lysosome. It localises to the mitochondrion outer membrane. The protein localises to the cytoplasm. The protein resides in the cytoskeleton. It is found in the phagosome. It carries out the reaction L-threonyl-[protein] + ATP = O-phospho-L-threonyl-[protein] + ADP + H(+). The enzyme catalyses L-seryl-[protein] + ATP = O-phospho-L-seryl-[protein] + ADP + H(+). The catalysed reaction is GTP + H2O = GDP + phosphate + H(+). Kinase activity is regulated by the GTPase activity of the ROC domain. GTP-bound LRRK2 kinase activity is stimulated by RAB29. Phosphorylation of RAB10 'Thr-73' is stimulated by RAB29 and RAB32. Inhibited by small molecule inhibitors MLi-2 and LRRK2-IN-1. Its function is as follows. Serine/threonine-protein kinase which phosphorylates a broad range of proteins involved in multiple processes such as neuronal plasticity, innate immunity, autophagy, and vesicle trafficking. Is a key regulator of RAB GTPases by regulating the GTP/GDP exchange and interaction partners of RABs through phosphorylation. Phosphorylates RAB3A, RAB3B, RAB3C, RAB3D, RAB8A, RAB8B, RAB10, RAB12, RAB29, RAB35, and RAB43. Regulates the RAB3IP-catalyzed GDP/GTP exchange for RAB8A through the phosphorylation of 'Thr-72' on RAB8A. Inhibits the interaction between RAB8A and GDI1 and/or GDI2 by phosphorylating 'Thr-72' on RAB8A. Regulates primary ciliogenesis through phosphorylation of RAB8A and RAB10, which promotes SHH signaling in the brain. Together with RAB29, plays a role in the retrograde trafficking pathway for recycling proteins, such as mannose-6-phosphate receptor (M6PR), between lysosomes and the Golgi apparatus in a retromer-dependent manner. Regulates neuronal process morphology in the intact central nervous system (CNS). Plays an important role in recruiting SEC16A to endoplasmic reticulum exit sites (ERES) and in regulating ER to Golgi vesicle-mediated transport and ERES organization. Positively regulates autophagy through a calcium-dependent activation of the CaMKK/AMPK signaling pathway. The process involves activation of nicotinic acid adenine dinucleotide phosphate (NAADP) receptors, increase in lysosomal pH, and calcium release from lysosomes. Phosphorylates PRDX3. By phosphorylating APP on 'Thr-743', which promotes the production and the nuclear translocation of the APP intracellular domain (AICD), regulates dopaminergic neuron apoptosis. Acts as a positive regulator of innate immunity by mediating phosphorylation of RIPK2 downstream of NOD1 and NOD2, thereby enhancing RIPK2 activation. Independent of its kinase activity, inhibits the proteasomal degradation of MAPT, thus promoting MAPT oligomerization and secretion. In addition, has GTPase activity via its Roc domain which regulates LRKK2 kinase activity. Recruited by RAB29/RAB7L1 to overloaded lysosomes where it phosphorylates and stabilizes RAB8A and RAB10 which promote lysosomal content release and suppress lysosomal enlargement through the EHBP1 and EHBP1L1 effector proteins. The polypeptide is Leucine-rich repeat serine/threonine-protein kinase 2 (Lrrk2) (Mus musculus (Mouse)).